Here is a 349-residue protein sequence, read N- to C-terminus: Phosphoribosylformylglycinamidine cyclo-ligase (349 aa).

It belongs to the AIR synthase family.

The protein resides in the cytoplasm. It carries out the reaction 2-formamido-N(1)-(5-O-phospho-beta-D-ribosyl)acetamidine + ATP = 5-amino-1-(5-phospho-beta-D-ribosyl)imidazole + ADP + phosphate + H(+). Its pathway is purine metabolism; IMP biosynthesis via de novo pathway; 5-amino-1-(5-phospho-D-ribosyl)imidazole from N(2)-formyl-N(1)-(5-phospho-D-ribosyl)glycinamide: step 2/2. The protein is Phosphoribosylformylglycinamidine cyclo-ligase of Lawsonia intracellularis (strain PHE/MN1-00).